An 828-amino-acid chain; its full sequence is BEN domain-containing protein 3 (828 aa).

Lys20 participates in a covalent cross-link: Glycyl lysine isopeptide (Lys-Gly) (interchain with G-Cter in SUMO); alternate. Lys20 is covalently cross-linked (Glycyl lysine isopeptide (Lys-Gly) (interchain with G-Cter in SUMO1); alternate). A Glycyl lysine isopeptide (Lys-Gly) (interchain with G-Cter in SUMO2); alternate cross-link involves residue Lys20. Glycyl lysine isopeptide (Lys-Gly) (interchain with G-Cter in SUMO2) cross-links involve residues Lys41, Lys56, Lys58, Lys73, Lys128, Lys129, Lys137, Lys142, and Lys158. Positions Lys56–Lys58 match the Nuclear localization signal motif. A Phosphoserine modification is found at Ser164. Residues Ser164–Ala184 are disordered. Residue Lys176 forms a Glycyl lysine isopeptide (Lys-Gly) (interchain with G-Cter in SUMO2) linkage. In terms of domain architecture, BEN 1 spans Pro242–Arg343. Position 379 is a phosphoserine (Ser379). A BEN 2 domain is found at Ala387–Ala487. Lys427 is covalently cross-linked (Glycyl lysine isopeptide (Lys-Gly) (interchain with G-Cter in SUMO2)). Residues Leu483–Leu504 are disordered. Position 489 is a phosphoserine (Ser489). Lys512 participates in a covalent cross-link: Glycyl lysine isopeptide (Lys-Gly) (interchain with G-Cter in SUMO); alternate. Residue Lys512 forms a Glycyl lysine isopeptide (Lys-Gly) (interchain with G-Cter in SUMO2); alternate linkage. Residue Lys528 forms a Glycyl lysine isopeptide (Lys-Gly) (interchain with G-Cter in SUMO2) linkage. The 103-residue stretch at Val548 to Gln650 folds into the BEN 3 domain. Lys700 is covalently cross-linked (Glycyl lysine isopeptide (Lys-Gly) (interchain with G-Cter in SUMO2)). The BEN 4 domain occupies Val715–Lys816.

In terms of assembly, homooligomer, probably a homooctamer. Interacts with HDAC2 and HDAC3, but not HDAC1. Interacts with SALL4. Interacts with SMARCA5/SNF2H, BAZ2A/TIP5 and USP21. Interacts with the nucleosome remodeling and histone deacetylase (NuRD) repressor complex. Interacts (via BEN domains 1 and 3) with ERCC6L (via N-terminal TPR repeat); the interaction is direct. Post-translationally, sumoylated at Lys-20 by SUMO1 and at Lys-512 by SUMO1, SUMO2 and SUMO3. Sumoylation probably occurs sequentially, with that of Lys-20 preceding that of Lys-512. It does not alter association with heterochromatin, but is required for the repression of transcription. As to expression, expressed at least in heart, kidney, liver, ovary and spleen, with highest levels in spleen and lowest in heart. Expressed on the surface of T-cells.

It is found in the nucleus. Its subcellular location is the nucleolus. Transcriptional repressor which associates with the NoRC (nucleolar remodeling complex) complex and plays a key role in repressing rDNA transcription. The sumoylated form modulates the stability of the NoRC complex component BAZ2A/TIP5 by controlling its USP21-mediated deubiquitination. Binds to unmethylated major satellite DNA and is involved in the recruitment of the Polycomb repressive complex 2 (PRC2) to major satellites. Stimulates the ERCC6L translocase and ATPase activities. In Homo sapiens (Human), this protein is BEN domain-containing protein 3 (BEND3).